The chain runs to 344 residues: tRNA N6-adenosine threonylcarbamoyltransferase (344 aa).

Fe cation is bound by residues H110 and H114. Residues 133–137 (VVSGA), D166, G179, and N278 each bind substrate. A Fe cation-binding site is contributed by D303.

The protein belongs to the KAE1 / TsaD family. Requires Fe(2+) as cofactor.

The protein resides in the cytoplasm. It catalyses the reaction L-threonylcarbamoyladenylate + adenosine(37) in tRNA = N(6)-L-threonylcarbamoyladenosine(37) in tRNA + AMP + H(+). Its function is as follows. Required for the formation of a threonylcarbamoyl group on adenosine at position 37 (t(6)A37) in tRNAs that read codons beginning with adenine. Is involved in the transfer of the threonylcarbamoyl moiety of threonylcarbamoyl-AMP (TC-AMP) to the N6 group of A37, together with TsaE and TsaB. TsaD likely plays a direct catalytic role in this reaction. This is tRNA N6-adenosine threonylcarbamoyltransferase from Chlamydia pneumoniae (Chlamydophila pneumoniae).